The following is a 924-amino-acid chain: 104 kDa microneme/rhoptry antigen (924 aa).

The signal sequence occupies residues 1–19 (MKFLILLFNILCLFPVLAA). The interval 490–907 (SKKKLAPITE…KKPKKPDSAY (418 aa)) is disordered. Basic and acidic residues-rich tracts occupy residues 522-532 (PGDKEGSEGHK) and 573-588 (GPKD…EPRK). Positions 592–617 (PRTASPTRRPSPKLPQLSKLPKSTSP) are enriched in low complexity. Over residues 653 to 673 (SFKEKFYDDYSKAASRSKETK) the composition is skewed to basic and acidic residues. Residues 724 to 736 (SPSTSPSEFFTPP) show a composition bias toward low complexity. Composition is skewed to basic and acidic residues over residues 737-747 (ESKRTRFHETP), 770-783 (KSPD…RSPS), and 816-825 (DPGRMAKDAS). Residues 857–867 (DDEGTEADDEE) are compositionally biased toward acidic residues. Basic and acidic residues predominate over residues 868 to 878 (THPPEERQKTE). The span at 879 to 901 (VRRRRPPKKPSKSPRPSKPKKPK) shows a compositional bias: basic residues. Aspartate 904 carries the GPI-anchor amidated aspartate lipid modification. Positions 905-924 (SAYIPSILAILVVSLIVGIL) are cleaved as a propeptide — removed in mature form.

The protein resides in the cell membrane. This is 104 kDa microneme/rhoptry antigen from Theileria parva (East coast fever infection agent).